The following is a 235-amino-acid chain: DUP240 protein DFP4 (235 aa).

Over 1 to 44 (MSSELLISNSKPRPEGLRKLCEGETVILPRDITPSKCAYFLKQN) the chain is Cytoplasmic. The chain crosses the membrane as a helical span at residues 45–65 (IVFISYIFIHIIITIILNRLA). The Extracellular portion of the chain corresponds to 66-72 (LSAHGNT). The chain crosses the membrane as a helical span at residues 73–93 (LIIILAALLITISLFLLLLLP). Residues 94–235 (YLSCSRYKLR…DKYPEMGVTV (142 aa)) are Cytoplasmic-facing.

The protein belongs to the DUP/COS family. As to quaternary structure, interacts according to large scale protein interaction studies with BZZ1, SRB4 and SUA7.

It localises to the cell membrane. This Saccharomyces cerevisiae (strain ATCC 204508 / S288c) (Baker's yeast) protein is DUP240 protein DFP4.